The following is a 1300-amino-acid chain: Insulin receptor-related protein (1300 aa).

A signal peptide spans 1-26 (MARPKLWPWGILLLVSLLSAGFNLDT). The N-linked (GlcNAc...) asparagine glycan is linked to Asn-47. Intrachain disulfides connect Cys-214/Cys-222, Cys-216/Cys-228, Cys-229/Cys-237, Cys-233/Cys-246, Cys-249/Cys-258, Cys-262/Cys-274, Cys-280/Cys-300, Cys-304/Cys-317, and Cys-320/Cys-324. The N-linked (GlcNAc...) asparagine glycan is linked to Asn-311. N-linked (GlcNAc...) asparagine glycosylation is found at Asn-411, Asn-492, Asn-528, Asn-616, Asn-634, Asn-756, Asn-885, and Asn-898. 2 consecutive Fibronectin type-III domains span residues 483-603 (QTRT…TLPA) and 607-707 (VPQD…AQEA). The cysteines at positions 657 and 864 are disulfide-linked. The tract at residues 740–762 (DAGRHRRAIGSPRPGGNSSDFEI) is disordered. Topologically, residues 747–921 (AIGSPRPGGN…PEEEDSGGLH (175 aa)) are extracellular. Residues 818-912 (IPGKLSWEAA…DSVAFYIPGP (95 aa)) form the Fibronectin type-III 3 domain. A helical membrane pass occupies residues 922–943 (ILLTVTPAGLMLLIILAALGFF). The Cytoplasmic segment spans residues 944-1300 (YSRKRNGTLY…CSLQNGGPEH (357 aa)). The Protein kinase domain maps to 979-1254 (ISIIRELGQG…SIQKELRPSF (276 aa)). ATP is bound by residues 985 to 993 (LGQGSFGMV) and Lys-1013. The active-site Proton acceptor is the Asp-1115. Residues Tyr-1145 and Tyr-1146 each carry the phosphotyrosine; by autocatalysis modification. A disordered region spans residues 1270–1300 (GLQPTTDAESSSPPTSKGASDCSLQNGGPEH). The segment covering 1272–1300 (QPTTDAESSSPPTSKGASDCSLQNGGPEH) has biased composition (polar residues).

Belongs to the protein kinase superfamily. Tyr protein kinase family. Insulin receptor subfamily. In terms of assembly, probable tetramer of 2 alpha and 2 beta chains linked by disulfide bonds. The alpha chains contribute to the formation of the ligand-binding domain, while the beta chains carry the kinase domain. Autophosphorylated on tyrosine residues between pH 7.9 and pH 10.5.

The protein localises to the membrane. The catalysed reaction is L-tyrosyl-[protein] + ATP = O-phospho-L-tyrosyl-[protein] + ADP + H(+). Functionally, receptor with tyrosine-protein kinase activity. Functions as a pH sensing receptor which is activated by increased extracellular pH. Activates an intracellular signaling pathway that involves IRS1 and AKT1/PKB. This chain is Insulin receptor-related protein (INSRR), found in Cavia porcellus (Guinea pig).